The sequence spans 148 residues: Outer envelope pore protein 16-1, chloroplastic (148 aa).

The interval 2–73 is contains 4 beta strands; that stretch reads PSSTFSGTVS…EHALKKLCKE (72 aa). 3 consecutive transmembrane segments (helical) span residues 75 to 91, 102 to 118, and 125 to 142; these read VYWG…EYGI, NAML…SAVG, and IVID…SQFV.

This sequence belongs to the Tim17/Tim22/Tim23 family. Plastid outer envelope porin OEP16 (TC 1.B.30) subfamily. Homodimer and oligomers in membrane. Forms large complexes including TOC33, pPORA and OEP161 during pPORA import into plastids at the plastid envelope membrane. As to expression, expressed predominantly in leaves and cotyledons.

It localises to the plastid. It is found in the chloroplast outer membrane. Its subcellular location is the etioplast membrane. Stimulated by GTP. Its function is as follows. Voltage-dependent high-conductance channel with a slight cation-selectivity; selective for amino acids but excludes triosephosphates or uncharged sugars. Non-essential amino acid-selective channel protein and translocation pore for NADPH:protochlorophyllide oxidoreductase A (PORA) and possibly PORB. Involved in PORA precursor (pPORA) import and thus confers photoprotection onto etiolated seedlings during greening. The sequence is that of Outer envelope pore protein 16-1, chloroplastic (OEP161) from Arabidopsis thaliana (Mouse-ear cress).